The sequence spans 401 residues: Deoxyhypusine synthase-like protein (401 aa).

It belongs to the deoxyhypusine synthase family.

In Thermosynechococcus vestitus (strain NIES-2133 / IAM M-273 / BP-1), this protein is Deoxyhypusine synthase-like protein.